A 249-amino-acid polypeptide reads, in one-letter code: Flavin-dependent thymidylate synthase (249 aa).

In terms of domain architecture, ThyX spans 7–235 (LDVQLIAATA…PVLFDDFHIT (229 aa)). Residues 94–97 (ELVR), 105–109 (QLSQR), and R174 contribute to the dUMP site. FAD-binding positions include 97–99 (RHR) and Q105. The ThyX motif signature appears at 97 to 107 (RHRHFSFSQLS). FAD contacts are provided by residues 190–192 (NYR) and H196. DUMP is bound at residue R201. R201 acts as the Involved in ionization of N3 of dUMP, leading to its activation in catalysis.

The protein belongs to the thymidylate synthase ThyX family. As to quaternary structure, homotetramer. It depends on FAD as a cofactor.

It catalyses the reaction dUMP + (6R)-5,10-methylene-5,6,7,8-tetrahydrofolate + NADPH + H(+) = dTMP + (6S)-5,6,7,8-tetrahydrofolate + NADP(+). It functions in the pathway pyrimidine metabolism; dTTP biosynthesis. Functionally, catalyzes the reductive methylation of 2'-deoxyuridine-5'-monophosphate (dUMP) to 2'-deoxythymidine-5'-monophosphate (dTMP) while utilizing 5,10-methylenetetrahydrofolate (mTHF) as the methyl donor, and NADPH and FADH(2) as the reductant. This chain is Flavin-dependent thymidylate synthase, found in Corynebacterium aurimucosum (strain ATCC 700975 / DSM 44827 / CIP 107346 / CN-1) (Corynebacterium nigricans).